Consider the following 441-residue polypeptide: ATP-dependent RNA helicase SUB2 (441 aa).

Residues 1-17 (MSHEGEEELLDYSDSEE) are compositionally biased toward acidic residues. Residues 1 to 47 (MSHEGEEELLDYSDSEEIALPSTTVESGSNGDAKAETTTVKEENTEQ) are disordered. Over residues 21–30 (PSTTVESGSN) the composition is skewed to polar residues. Residues 33–46 (AKAETTTVKEENTE) are compositionally biased toward basic and acidic residues. Positions 57–85 (TGFRDFLLKPELLRAIVDCGFEHPSEVQQ) match the Q motif motif. One can recognise a Helicase ATP-binding domain in the interval 88–263 (IPQSILGTDV…KKFMSSPLEI (176 aa)). Residue 101–108 (AKAGVGKT) participates in ATP binding. The DECD box motif lies at 210-213 (DECD). Positions 275 to 436 (GLQQYYVDVE…PYPAEGVDPS (162 aa)) constitute a Helicase C-terminal domain.

The protein belongs to the DEAD box helicase family. DECD subfamily.

It is found in the nucleus. The enzyme catalyses ATP + H2O = ADP + phosphate + H(+). ATP-binding RNA helicase involved in transcription elongation and required for the export of mRNA out of the nucleus. SUB2 also plays a role in pre-mRNA splicing and spliceosome assembly. May be involved in rDNA and telomeric silencing, and maintenance of genome integrity. The polypeptide is ATP-dependent RNA helicase SUB2 (SUB2) (Yarrowia lipolytica (strain CLIB 122 / E 150) (Yeast)).